We begin with the raw amino-acid sequence, 694 residues long: Probable methyltransferase PMT11 (694 aa).

The Cytoplasmic segment spans residues 1-14 (MKPLTNGDLFKSPT). Residues 15–32 (LIKISALVFVTVAFFYLG) form a helical; Signal-anchor for type II membrane protein membrane-spanning segment. Residues 33-694 (KHWSDDGYQQ…LTCEKRLLRA (662 aa)) are Lumenal-facing. 2 N-linked (GlcNAc...) asparagine glycosylation sites follow: Asn-69 and Asn-77. Positions 83 to 128 (IPATIRQQPPSVVADTEKVKVEANPPPPPPPSPSPPPPPGPVKSFG) are disordered. Residues 106-123 (NPPPPPPPSPSPPPPPGP) show a composition bias toward pro residues. N-linked (GlcNAc...) asparagine glycans are attached at residues Asn-155, Asn-378, and Asn-423.

This sequence belongs to the methyltransferase superfamily.

Its subcellular location is the golgi apparatus membrane. The polypeptide is Probable methyltransferase PMT11 (Arabidopsis thaliana (Mouse-ear cress)).